The primary structure comprises 486 residues: MNGTLDHPDQPDLDAIKMFVGQVPRTWSEKDLRELFEQYGAVYEINVLRDRSQNPPQSKGCCFVTFYTRKAALEAQNALHNMKVLPGMHHPIQMKPADSEKNNAVEDRKLFIGMISKKCTENDIRVMFSSFGQIEECRILRGPDGLSRGCAFVTFTTRAMAQTAIKAMHQAQTMEGCSSPMVVKFADTQKDKEQKRMAQQLQQQMQQISAASVWGNLAGLNTLGPQYLALYLQLLQQTASSGNLNTLSSLHPMGGLNAMQLQNLAALAAAASAAQNTPSGTNALTTSSSPLSVLTSSGSSPSSSSSNSVNPIASLGALQTLAGATAGLNVGSLAGMAALNGGLGSSGLSNGTGSTMEALTQAYSGIQQYAAAALPTLYNQNLLTQQSIGAAGSQKEGPEGANLFIYHLPQEFGDQDLLQMFMPFGNVVSAKVFIDKQTNLSKCFGFVSYDNPVSAQAAIQSMNGFQIGMKRLKVQLKRSKNDSKPY.

Methionine 1 is modified (N-acetylmethionine). Position 4 is a phosphothreonine (threonine 4). RRM domains lie at 16-99 and 108-188; these read IKMF…PADS and RKLF…FADT. Lysine 109 is covalently cross-linked (Glycyl lysine isopeptide (Lys-Gly) (interchain with G-Cter in SUMO2)). A phosphoserine mark is found at serine 179 and serine 302. The tract at residues 277-309 is disordered; it reads TPSGTNALTTSSSPLSVLTSSGSSPSSSSSNSV. Positions 284 to 309 are enriched in low complexity; sequence LTTSSSPLSVLTSSGSSPSSSSSNSV. In terms of domain architecture, RRM 3 spans 401–479; sequence ANLFIYHLPQ…KRLKVQLKRS (79 aa).

Belongs to the CELF/BRUNOL family. As to quaternary structure, component of an EIF2 complex at least composed of CELF1/CUGBP1, CALR, CALR3, EIF2S1, EIF2S2, HSP90B1 and HSPA5. Associates with polysomes. Interacts with HNRNPH1; the interaction in RNA-dependent. Interacts with PARN. Phosphorylated. Its phosphorylation status increases in senescent cells. As to expression, ubiquitous.

The protein resides in the nucleus. The protein localises to the cytoplasm. RNA-binding protein implicated in the regulation of several post-transcriptional events. Involved in pre-mRNA alternative splicing, mRNA translation and stability. Mediates exon inclusion and/or exclusion in pre-mRNA that are subject to tissue-specific and developmentally regulated alternative splicing. Specifically activates exon 5 inclusion of cardiac isoforms of TNNT2 during heart remodeling at the juvenile to adult transition. Acts both as an activator and as a repressor of a pair of coregulated exons: promotes inclusion of the smooth muscle (SM) exon but exclusion of the non-muscle (NM) exon in actinin pre-mRNAs. Activates SM exon 5 inclusion by antagonizing the repressive effect of PTB. Promotes exclusion of exon 11 of the INSR pre-mRNA. Inhibits, together with HNRNPH1, insulin receptor (IR) pre-mRNA exon 11 inclusion in myoblast. Increases translation and controls the choice of translation initiation codon of CEBPB mRNA. Increases mRNA translation of CEBPB in aging liver. Increases translation of CDKN1A mRNA by antagonizing the repressive effect of CALR3. Mediates rapid cytoplasmic mRNA deadenylation. Recruits the deadenylase PARN to the poly(A) tail of EDEN-containing mRNAs to promote their deadenylation. Required for completion of spermatogenesis. Binds to (CUG)n triplet repeats in the 3'-UTR of transcripts such as DMPK and to Bruno response elements (BREs). Binds to muscle-specific splicing enhancer (MSE) intronic sites flanking the alternative exon 5 of TNNT2 pre-mRNA. Binds to AU-rich sequences (AREs or EDEN-like) localized in the 3'-UTR of JUN and FOS mRNAs. Binds to the IR RNA. Binds to the 5'-region of CDKN1A and CEBPB mRNAs. Binds with the 5'-region of CEBPB mRNA in aging liver. May be a specific regulator of miRNA biogenesis. Binds to primary microRNA pri-MIR140 and, with CELF2, negatively regulates the processing to mature miRNA. In Homo sapiens (Human), this protein is CUGBP Elav-like family member 1 (CELF1).